The sequence spans 397 residues: uncharacterized protein (397 aa).

[4Fe-4S] cluster contacts are provided by Cys-8, Cys-14, Cys-17, and Cys-95. S-adenosyl-L-methionine is bound by residues Gln-229, Tyr-258, Glu-279, and Asp-325. Cys-352 acts as the Nucleophile in catalysis.

It belongs to the class I-like SAM-binding methyltransferase superfamily. RNA M5U methyltransferase family.

This is an uncharacterized protein from Chlamydia muridarum (strain MoPn / Nigg).